The primary structure comprises 423 residues: Calcium up-regulated protein A (423 aa).

The segment covering M1–L19 has biased composition (basic and acidic residues). Positions M1–K27 are disordered. 2 consecutive Ricin B-type lectin domains span residues K27–F147 and Q118–N251.

Belongs to the cup family.

It is found in the cytoplasm. Its subcellular location is the membrane. May play an important role in stabilizing and/or regulating the cell membrane during Ca(2+) stress or certain stages of development. In Dictyostelium discoideum (Social amoeba), this protein is Calcium up-regulated protein A (cupA).